The chain runs to 364 residues: Small ribosomal subunit biogenesis GTPase RsgA (364 aa).

The CP-type G domain maps to 101–264 (KGLVEKPGVP…VIDTPGLREL (164 aa)). Residues 154–157 (NKSD) and 206–214 (GSSGAGKST) each bind GTP. 4 residues coordinate Zn(2+): Cys-288, Cys-293, His-295, and Cys-301. The segment at 339–364 (QVAQKRKRKTIPRQGKRWRREHGDGQ) is disordered. Over residues 342 to 358 (QKRKRKTIPRQGKRWRR) the composition is skewed to basic residues.

The protein belongs to the TRAFAC class YlqF/YawG GTPase family. RsgA subfamily. In terms of assembly, monomer. Associates with 30S ribosomal subunit, binds 16S rRNA. Requires Zn(2+) as cofactor.

Its subcellular location is the cytoplasm. Its function is as follows. One of several proteins that assist in the late maturation steps of the functional core of the 30S ribosomal subunit. Helps release RbfA from mature subunits. May play a role in the assembly of ribosomal proteins into the subunit. Circularly permuted GTPase that catalyzes slow GTP hydrolysis, GTPase activity is stimulated by the 30S ribosomal subunit. The sequence is that of Small ribosomal subunit biogenesis GTPase RsgA from Syntrophotalea carbinolica (strain DSM 2380 / NBRC 103641 / GraBd1) (Pelobacter carbinolicus).